The sequence spans 357 residues: MKKYLLLALLPFLYACSNSSNQGINYDEAFAKDTQGLDILTGQFSHNIDRIWGVNELLVASRKDYVKYTDSFYTRSHVSFDEGNIVIETQQDLNRLHNAIVHTLLMGADAKGIDLFASGDVPISSRPFLLGQVVDHQGQQIANQVIASNFATYLIQNKLQTRRLQNGHTVQFVSVPMIANHVEVRARKYLPLIRKAAQRYGIDESLILGIMQTESSFNPYAISYANAIGLMQVVPHTAGRDVFAMKGKGGQPSTRYLYDPANNIDAGVSYLWILQNQYLDGITNPTSKRFAMISAYNSGAGAVLRVFDNDKDTAIYKINQMYPEQVYRILTTVHPSSQARNYLLKVDKAQKKFRVRR.

An N-terminal signal peptide occupies residues 1 to 15 (MKKYLLLALLPFLYA). Residue Cys-16 is the site of N-palmitoyl cysteine attachment. Cys-16 carries S-diacylglycerol cysteine lipidation.

Belongs to the transglycosylase Slt family.

The protein localises to the cell outer membrane. It catalyses the reaction Exolytic cleavage of the (1-&gt;4)-beta-glycosidic linkage between N-acetylmuramic acid (MurNAc) and N-acetylglucosamine (GlcNAc) residues in peptidoglycan, from either the reducing or the non-reducing ends of the peptidoglycan chains, with concomitant formation of a 1,6-anhydrobond in the MurNAc residue.. Its function is as follows. Murein-degrading enzyme. May play a role in recycling of muropeptides during cell elongation and/or cell division. The chain is Membrane-bound lytic murein transglycosylase C from Haemophilus influenzae (strain PittGG).